Here is a 504-residue protein sequence, read N- to C-terminus: Arabinose import ATP-binding protein AraG (504 aa).

ABC transporter domains follow at residues 8 to 243 and 256 to 499; these read LSFR…MVGR and YGEE…MPKV. Residue 40-47 coordinates ATP; it reads GENGAGKS.

It belongs to the ABC transporter superfamily. Arabinose importer (TC 3.A.1.2.2) family. As to quaternary structure, the complex is composed of two ATP-binding proteins (AraG), two transmembrane proteins (AraH) and a solute-binding protein (AraF).

Its subcellular location is the cell inner membrane. It catalyses the reaction L-arabinose(out) + ATP + H2O = L-arabinose(in) + ADP + phosphate + H(+). Part of the ABC transporter complex AraFGH involved in arabinose import. Responsible for energy coupling to the transport system. This is Arabinose import ATP-binding protein AraG from Shigella boydii serotype 4 (strain Sb227).